The primary structure comprises 213 residues: Alkylbase DNA glycosidase-like protein mag2 (213 aa).

The DNA site is built by Lys53, Leu54, Ser61, His91, Gly94, Ser96, Lys97, Lys99, Glu102, Lys137, Gly138, Lys140, Thr143, Ser163, and Thr164.

This sequence belongs to the alkylbase DNA glycosidase AlkA family.

The protein resides in the nucleus. Its function is as follows. Alkylbase DNA glycosidase-like protein that shows no DNA glycosylase activity for alkylated bases. The molecular role of mag2 appears to be abasic (AP) site recognition and protection, while possibly facilitating damage signaling by structurally sculpting the DNA substrate. Stimulates AP site binding to mismatch repair protein mutS. The polypeptide is Alkylbase DNA glycosidase-like protein mag2 (Schizosaccharomyces pombe (strain 972 / ATCC 24843) (Fission yeast)).